A 579-amino-acid polypeptide reads, in one-letter code: MSIYELFHYSLFLGLFVAFTYNKKQPPVFGAALAFWCILLSFLGLSFRHIPNNLSNYNVLTANAPFFYQISGTWSNHEGSISLWCRILSFYGFLLCYRGRPQSHNVSKRGGHRETLFYSFVSNFVKNPILSLPRYEQKSRAAPQLYTPFVLRTFVDSELRSRRNRTFDGPALFYVYAPLYPERKMSFAPLGARLPVVRGEGKRMSLLLHLARDDKERASSIDEQRIDGALGIALFFSPFLSASSDPFVRNFFVRTEPLAESNPVPQDPISAIHPPCIYAGDVASAMGFGLCRSKMMNGIVALHSPPMRKDAAEKNGTLFRSAGCVGSRITSELFTLKFKHVGEKCYPALLLRSNRSPLMLLRRRFFALSSLWTGALVDTGREQAKRVVRNGKKDTTTSPLCWTAGANTVVSDQDQEPIRIWILTCRWFLNVGILLGSWWAHHELGRGGWWFRDPVENASFMPRVLATARIHSVILPLLHSWTSFLNIVTLPCCVSGTSSIRSGLLAPVHSFATDDTRGIFLWRFFLLMTGISMILFSQMKQQASVRRTYKKEMVMARSTLVHLRHSARAQPRPVMLWKN.

Belongs to the CcmF/CycK/Ccl1/NrfE/CcsA family.

The protein localises to the mitochondrion. In terms of biological role, could be involved in assembly and maturation of cytochromes c. May play a role in guidance of apocytochromes and heme groups for the covalent linkage introduced by the cytochrome-c-heme lyase. The protein is Probable cytochrome c biosynthesis protein of Daucus carota (Wild carrot).